A 257-amino-acid chain; its full sequence is UPF0246 protein Rsph17025_0016 (257 aa).

It belongs to the UPF0246 family.

This chain is UPF0246 protein Rsph17025_0016, found in Cereibacter sphaeroides (strain ATCC 17025 / ATH 2.4.3) (Rhodobacter sphaeroides).